The primary structure comprises 154 residues: Protein FAM162A (154 aa).

The interval 76 to 102 is required for proapoptotic activity; it reads RFKKEDEIPETVSLEMLDAAKNKMRVK. Residues 103–120 traverse the membrane as a helical segment; sequence ISYLMIALTVVGCIFMVI.

This sequence belongs to the UPF0389 family. In terms of assembly, interacts with HSP90AB1; HSP90AB1 is essential for FAM162A mitochondrial localization and pro-apoptotic activity. Interacts with VDAC2; the interaction is probably involved in inducing mitochondrial permeability transition.

The protein resides in the mitochondrion membrane. In terms of biological role, proposed to be involved in regulation of apoptosis; the exact mechanism may differ between cell types/tissues. May be involved in hypoxia-induced cell death of transformed cells implicating cytochrome C release and caspase activation (such as CASP9) and inducing mitochondrial permeability transition. May be involved in hypoxia-induced cell death of neuronal cells probably by promoting release of AIFM1 from mitochondria to cytoplasm and its translocation to the nucleus; however, the involvement of caspases has been reported conflictingly. The chain is Protein FAM162A (FAM162A) from Homo sapiens (Human).